The primary structure comprises 454 residues: MEDYLQDCRAALQESRPLHVVLGNEACDLDSMVSALALAFYLTKTSEAEDIFIPVLNIKRSELPLRGDNVFFLQEVKIAESALIFRDEIDLLALHQAGQLTLILVDHHMLPKSDAALEEAVAEVLDHRPIEQKYCPPCHVSVELVGSCATLVAERILQGAPETLDRQTAALLHGTIILDCVNMDAKIGKATLKDNEYVEKLEALFPDLPKRKDIFDSLQKAKFDVSGLTTEQMLRKDQKTIYRQGTKVAVSAVYMDLEAFLQRSGLLSDLSAFCQDHSYDALVAMAIFFNTHNEPVRQLAIFCPHEALRMTICGVLEQSTSPALKLTPIPSISAHLQAYLQGNTQVSRKKLLPVLQEALSAYLDSMRTPAGQLEAALGMSREQADKELDKASNSLIAGLSQDDEDPPLPPTPMNSLVDECPLDQGLPKLSAEAVFEKCSQISLSQSTRACPSNK.

Residue M1 is modified to N-acetylmethionine. Mn(2+) contacts are provided by D28, D30, D106, and D179. A DHH motif motif is present at residues 106–108 (DHH). The interval 394–421 (SLIAGLSQDDEDPPLPPTPMNSLVDECP) is essential for homodimerization. Residues 398–421 (GLSQDDEDPPLPPTPMNSLVDECP) are disordered. S400 carries the post-translational modification Phosphoserine. T411 is modified (phosphothreonine). S415 bears the Phosphoserine mark.

It belongs to the PPase class C family. Prune subfamily. In terms of assembly, homooligomer. Able to homodimerize via its C-terminal domain. Interacts with NME1. Interacts with GSK3; at focal adhesion complexes where paxillin and vinculin are colocalized. Interacts with alpha and beta tubulin. The cofactor is Mn(2+).

The protein resides in the cytoplasm. It is found in the nucleus. The protein localises to the cell junction. It localises to the focal adhesion. The catalysed reaction is diphosphate + H2O = 2 phosphate + H(+). With respect to regulation, activated by magnesium ions and inhibited by manganese ions. Inhibited by dipyridamole, moderately sensitive to IBMX and inhibited by vinpocetine. Functionally, phosphodiesterase (PDE) that has higher activity toward cAMP than cGMP, as substrate. Plays a role in cell proliferation, migration and differentiation, and acts as a negative regulator of NME1. Plays a role in the regulation of neurogenesis. Involved in the regulation of microtubule polymerization. This is Exopolyphosphatase PRUNE1 (Prune1) from Rattus norvegicus (Rat).